The chain runs to 598 residues: Integrator complex subunit 11 (598 aa).

Zn(2+)-binding residues include H68, H70, D72, H73, H157, and D178. The HXHXDH motif motif lies at 68 to 73 (HFHLDH). Residue E203 is part of the active site. H414 provides a ligand contact to Zn(2+). The short motif at 470–480 (PLPDAKRPRTM) is the Nuclear localization signal element.

This sequence belongs to the metallo-beta-lactamase superfamily. RNA-metabolizing metallo-beta-lactamase-like family. INTS11 subfamily. As to quaternary structure, component of the Integrator complex, composed of core subunits INTS1, INTS2, INTS3, INTS4, INTS5, INTS6, INTS7, INTS8, INTS9/RC74, INTS10, INTS11/CPSF3L, INTS12, INTS13, INTS14 and INTS15. The core complex associates with protein phosphatase 2A subunits PPP2CA and PPP2R1A, to form the Integrator-PP2A (INTAC) complex. INTS11 is part of the RNA endonuclease subcomplex, composed of INTS4, INTS9, INTS11 and inositol hexakisphosphate (InsP6). The cofactor is Zn(2+).

The protein resides in the nucleus. The protein localises to the cytoplasm. RNA endonuclease component of the integrator complex, a multiprotein complex that terminates RNA polymerase II (Pol II) transcription in the promoter-proximal region of genes. The integrator complex provides a quality checkpoint during transcription elongation by driving premature transcription termination of transcripts that are unfavorably configured for transcriptional elongation: the complex terminates transcription by (1) catalyzing dephosphorylation of the C-terminal domain (CTD) of Pol II subunit POLR2A/RPB1 and SUPT5H/SPT5, (2) degrading the exiting nascent RNA transcript via endonuclease activity and (3) promoting the release of Pol II from bound DNA. The integrator complex is also involved in terminating the synthesis of non-coding Pol II transcripts, such as enhancer RNAs (eRNAs), small nuclear RNAs (snRNAs), telomerase RNAs and long non-coding RNAs (lncRNAs). Within the integrator complex, INTS11 constitutes the RNA endonuclease subunit that degrades exiting nascent RNA transcripts. This is Integrator complex subunit 11 (cpsf3l) from Danio rerio (Zebrafish).